A 590-amino-acid polypeptide reads, in one-letter code: NADH-ubiquinone oxidoreductase chain 5 (590 aa).

A run of 15 helical transmembrane segments spans residues 1–21 (MNLI…MSIM), 31–51 (LMVL…NNEL), 77–97 (LLFT…SLWY), 104–124 (INKF…IITA), 130–150 (LFIG…WWHG), 167–187 (IGDI…SINM), 190–210 (LMIQ…AAAT), 230–250 (TPVS…FLLI), 261–281 (IMLT…AAAA), 314–336 (AFLH…GSYI), 355–375 (LPMT…MPFL), 398–418 (IMIT…IMLF), 439–461 (HPLA…STLQ), 466–486 (VTMP…GVLL), and 568–588 (MIKN…LFIM).

This sequence belongs to the complex I subunit 5 family.

It localises to the mitochondrion inner membrane. The catalysed reaction is a ubiquinone + NADH + 5 H(+)(in) = a ubiquinol + NAD(+) + 4 H(+)(out). Functionally, core subunit of the mitochondrial membrane respiratory chain NADH dehydrogenase (Complex I) that is believed to belong to the minimal assembly required for catalysis. Complex I functions in the transfer of electrons from NADH to the respiratory chain. The immediate electron acceptor for the enzyme is believed to be ubiquinone. The protein is NADH-ubiquinone oxidoreductase chain 5 (MT-ND5) of Lycodon semicarinatus (Ryukyu odd-tooth snake).